Reading from the N-terminus, the 344-residue chain is Uroporphyrinogen decarboxylase (344 aa).

Residues 27 to 31 (RQAGR), Phe46, Asp77, Tyr153, Thr208, and His324 each bind substrate.

Belongs to the uroporphyrinogen decarboxylase family. Homodimer.

It is found in the cytoplasm. It catalyses the reaction uroporphyrinogen III + 4 H(+) = coproporphyrinogen III + 4 CO2. It participates in porphyrin-containing compound metabolism; protoporphyrin-IX biosynthesis; coproporphyrinogen-III from 5-aminolevulinate: step 4/4. Functionally, catalyzes the decarboxylation of four acetate groups of uroporphyrinogen-III to yield coproporphyrinogen-III. This chain is Uroporphyrinogen decarboxylase, found in Bradyrhizobium diazoefficiens (strain JCM 10833 / BCRC 13528 / IAM 13628 / NBRC 14792 / USDA 110).